Here is a 522-residue protein sequence, read N- to C-terminus: Penicillin-sensitive carboxypeptidase A (522 aa).

Ser94 acts as the Acyl-ester intermediate in catalysis. Catalysis depends on Lys97, which acts as the Proton acceptor. The active site involves Ser351. Substrate is bound at residue Lys461.

The protein belongs to the peptidase S13 family.

It catalyses the reaction Preferential cleavage: (Ac)2-L-Lys-D-Ala-|-D-Ala. Also transpeptidation of peptidyl-alanyl moieties that are N-acyl substituents of D-alanine.. Inhibited by penicillin G. Carboxypeptidase. This is Penicillin-sensitive carboxypeptidase A (pscA) from Dictyostelium discoideum (Social amoeba).